We begin with the raw amino-acid sequence, 1249 residues long: MEEVITIAQIVHRGTDILSLNNEEIEALVDEIYSTLKGSNDIKNIRLIDFLFTLKDFVNHVRAEQSKLPDLSMPMEAYIRQLLVDSDVVPIVSEKKKELRVRPSTRKEIFLINGTHLAVPAEAPIEIYGLKLRLKTFSPQCFMRMAEIGSFSPETLGYVASGANLTNFIRVFMKCVDQETWKKNGEGVVVTTKENIIQFTHQYIELYKFLRSGGHSWLINRLAEEMVHRKLDREDQGSHISNIVETEEIEPEENIKRVIFFLKELSTMYSVSPVFTSGYMPLLYDLYRAGYLEVLWNPVEQKFLQHAEQREKEQMILQQVDMKLMEVTTQARQYFKIMEEKIGRVQSDAIREILTMEGKVDDPNSILQEVIKACGKQEAELITTEYLNIKKQWELQEKNACAHLKLVKQLRSGLQYAESLKVLESIRVLYKEKNNTTNWNLCKACGFKLLCPHVDMLIQLQAAEASYDTMRTKLMKFSGINKEKENNQGLIYSYFCKICGEELAHFIQEDRTADVGVIGDLNSKLRIFIWQETMKACTFIHFGKLVDVKQFANIAVNVCLPLVYSIENIKKEEDYDPLTQLYAVIYIYAYILNLIYSSQKNKEFLTITIHGMKADSSLNAYVTFLLEKMMQQYSGIINQLSEITDQWIANNFREAFKKIIHQNGLQGLSVQDDTKVLLTEILLDPMYDYAATVARIDGSIPMHKPRTPKEAEYEFKTVIGRTPAELLSQKEFYDKIYTSKYRPDFTQLARLKDIYFQEESLRVWWGGRDEEKTSTLIYLRAYELFLKYLQNAPNFNSELAEFKTYENAYGEQKALLAQQGFYNIFDPNTGRADQRTRLFEYKRLPISTLYDERGLPHKWTIYVYKAVDSSQKPTEIEVTRKDVIKKIDNHYALADLRCSVCHVLQHEVGQLNIKKVQTALKASLEFNTFYAFYESRCPKGGLHDFQDKKCVKCGLFTYIIYDHLSQPELVHDYYNNYKDQYDKEKMSIRSIQIKKDMTMPSTETQPKPPQEPWTFDYGKIIKTAKILDISPAVIEAIGAMEGRSYADIREGQGAPPPPTSMDDPRLMAVDSAVRIFLYNYNCLRHVSTFNKPPMHVERLVKHLSYEEKEDLEKVLPNVVNEYHTTFKHLRVTDPASALLYSIEFLCISFLTLYDIKEPSWVVNIVREFALTELNTIIQSEKLLSKPGAFNFMIFGEDFVCSGEDSSMDDISAYSSPGLFGEDIIDRLDDPFSIEDVDISLDVLDNLAPQ.

It belongs to the asfivirus M1249L family. In terms of assembly, interacts with the minor capsid protein p17 and with the hexon capsid protein p72 capsomers; these interactions form a rigid zipper structure that stabilizes the capsomers. Interacts with host IRF3.

Its subcellular location is the virion. It is found in the host cytoplasm. Its function is as follows. Together with the penton and the other minor capsid proteins (p17, p49), forms a complicated network immediately below the outer capsid shell, stabilizing the whole capsid. In addition, blocks IFN-beta transactivation mediated by the cGAS-STING pathway and regulates the transcriptional activity of IFN-beta. Mechanistically, suppresses the phosphorylation of host key adapter protein TBK1 and degrades host IRF3 in the cytoplasm. This is Minor capsid protein M1249L from Ornithodoros (relapsing fever ticks).